Here is a 388-residue protein sequence, read N- to C-terminus: 1-deoxy-D-xylulose 5-phosphate reductoisomerase (388 aa).

7 residues coordinate NADPH: Thr13, Gly14, Ser15, Ile16, Arg40, Asn41, and Asn124. Lys125 contacts 1-deoxy-D-xylulose 5-phosphate. Glu126 contributes to the NADPH binding site. Position 150 (Asp150) interacts with Mn(2+). Residues Ser151, Glu152, Ser176, and His199 each contribute to the 1-deoxy-D-xylulose 5-phosphate site. Glu152 provides a ligand contact to Mn(2+). Gly205 provides a ligand contact to NADPH. 1-deoxy-D-xylulose 5-phosphate-binding residues include Ser212, Asn217, Lys218, and Glu221. Glu221 lines the Mn(2+) pocket.

This sequence belongs to the DXR family. As to quaternary structure, homodimer. Mg(2+) serves as cofactor. It depends on Mn(2+) as a cofactor. Requires Co(2+) as cofactor.

It carries out the reaction 2-C-methyl-D-erythritol 4-phosphate + NADP(+) = 1-deoxy-D-xylulose 5-phosphate + NADPH + H(+). Its pathway is isoprenoid biosynthesis; isopentenyl diphosphate biosynthesis via DXP pathway; isopentenyl diphosphate from 1-deoxy-D-xylulose 5-phosphate: step 1/6. Competitively inhibited by the antibiotic fosmidomycin. Functionally, catalyzes the NADPH-dependent rearrangement and reduction of 1-deoxy-D-xylulose-5-phosphate (DXP) to 2-C-methyl-D-erythritol 4-phosphate (MEP). Cannot use NADH instead of NADPH as the reducing agent. This is 1-deoxy-D-xylulose 5-phosphate reductoisomerase from Zymomonas mobilis subsp. mobilis (strain ATCC 31821 / ZM4 / CP4).